Reading from the N-terminus, the 110-residue chain is NADH dehydrogenase [ubiquinone] iron-sulfur protein 6, mitochondrial (110 aa).

The N-terminal 22 residues, 1 to 22 (MASNLLKALIRSQILPSSRRNF), are a transit peptide targeting the mitochondrion.

This sequence belongs to the complex I NDUFS6 subunit family. In terms of assembly, complex I is composed of at least 49 different subunits. This is a component of the iron-sulfur (IP) fragment of the enzyme.

It localises to the mitochondrion inner membrane. Functionally, accessory subunit of the mitochondrial membrane respiratory chain NADH dehydrogenase (Complex I), that is believed not to be involved in catalysis. Complex I functions in the transfer of electrons from NADH to the respiratory chain. The immediate electron acceptor for the enzyme is believed to be ubiquinone. In Arabidopsis thaliana (Mouse-ear cress), this protein is NADH dehydrogenase [ubiquinone] iron-sulfur protein 6, mitochondrial.